We begin with the raw amino-acid sequence, 59 residues long: Conotoxin mr5a (59 aa).

A signal peptide spans 1–22 (MRCLPVFVILLLLIASAPSVDA). Residues 23–48 (RPKTKDDMPLASFHDNAKRILQILQD) constitute a propeptide that is removed on maturation.

Post-translationally, contains 2 disulfide bonds that can be either 'C1-C3, C2-C4' or 'C1-C4, C2-C3', since these disulfide connectivities have been observed for conotoxins with cysteine framework V (for examples, see AC P0DQQ7 and AC P81755). As to expression, expressed by the venom duct.

The protein localises to the secreted. The sequence is that of Conotoxin mr5a from Conus marmoreus (Marble cone).